The following is a 407-amino-acid chain: S-adenosylmethionine synthase (407 aa).

Histidine 19 contacts ATP. A Mg(2+)-binding site is contributed by aspartate 21. Glutamate 47 lines the K(+) pocket. Residues glutamate 60 and glutamine 103 each contribute to the L-methionine site. The flexible loop stretch occupies residues 103–113; sequence QSQEIADGVDT. A disordered region spans residues 108–131; that stretch reads ADGVDTSQEARGDGHFEEDDRAGA. Residues 178–180, aspartate 258, 264–265, alanine 281, and lysine 285 contribute to the ATP site; these read DGK and RK. Aspartate 258 lines the L-methionine pocket. Lysine 289 is an L-methionine binding site.

This sequence belongs to the AdoMet synthase family. In terms of assembly, homotetramer; dimer of dimers. Mg(2+) serves as cofactor. K(+) is required as a cofactor.

It localises to the cytoplasm. It catalyses the reaction L-methionine + ATP + H2O = S-adenosyl-L-methionine + phosphate + diphosphate. It participates in amino-acid biosynthesis; S-adenosyl-L-methionine biosynthesis; S-adenosyl-L-methionine from L-methionine: step 1/1. In terms of biological role, catalyzes the formation of S-adenosylmethionine (AdoMet) from methionine and ATP. The overall synthetic reaction is composed of two sequential steps, AdoMet formation and the subsequent tripolyphosphate hydrolysis which occurs prior to release of AdoMet from the enzyme. The protein is S-adenosylmethionine synthase of Corynebacterium efficiens (strain DSM 44549 / YS-314 / AJ 12310 / JCM 11189 / NBRC 100395).